We begin with the raw amino-acid sequence, 1031 residues long: MMS19 nucleotide excision repair protein homolog (1031 aa).

The residue at position 2 (A2) is an N-acetylalanine. HEAT repeat units lie at residues 867–905 (QRFF…RLPK), 909–947 (LPEL…EAPQ), 950–988 (SLHV…LPTS), and 991–1029 (LPYK…LGSP). The residue at position 1028 (S1028) is a Phosphoserine.

Belongs to the MET18/MMS19 family. Component of the CIA complex. In the CIA complex, interacts directly with CIAO2B and CIAO3. Component of the MMXD complex, composed of CIAO1, ERCC2, CIAO2B, MMS19 and SLC25A5. Interacts with CIAO2B; the interaction is direct. Interacts with ERCC2/XPD; the interaction is direct. Interacts with ERCC3/XPB and NCOA3/RAC3. Interacts with RTEL1; the interaction mediates the association of RTEL1 with the CIA complex. Interacts with BRIP1. Interacts with KIF4A; the interaction facilitates the transfer of Fe-S clusters to KIF4A to ensure proper localization of KIF4A to the mitotic machinery components. Interacts with CCDC117; the interaction is indirect. Post-translationally, ubiquitinated; undergoes 'Lys-48'-linked polyubiquitination. As to expression, ubiquitously expressed with higher expression in testis.

It is found in the nucleus. Its subcellular location is the cytoplasm. The protein localises to the cytoskeleton. The protein resides in the spindle. Key component of the cytosolic iron-sulfur protein assembly (CIA) complex, a multiprotein complex that mediates the incorporation of iron-sulfur cluster into apoproteins specifically involved in DNA metabolism and genomic integrity. In the CIA complex, MMS19 acts as an adapter between early-acting CIA components and a subset of cellular target Fe/S proteins such as ERCC2/XPD, FANCJ and RTEL1, thereby playing a key role in nucleotide excision repair (NER), homologous recombination-mediated double-strand break DNA repair, DNA replication and RNA polymerase II (POL II) transcription. As a CIA complex component and in collaboration with CIAO1 and CIAO2, binds to and facilitates the assembly of most cytosolic-nuclear Fe/S proteins. As part of the mitotic spindle-associated MMXD complex, plays a role in chromosome segregation, probably by facilitating iron-sulfur cluster assembly into ERCC2/XPD. Together with CIAO2, facilitates the transfer of Fe-S clusters to the motor protein KIF4A, which ensures proper localization of KIF4A to mitotic machinery components to promote the progression of mitosis. Indirectly acts as a transcriptional coactivator of estrogen receptor (ER), via its role in iron-sulfur insertion into some component of the TFIIH-machinery. This is MMS19 nucleotide excision repair protein homolog from Mus musculus (Mouse).